The sequence spans 139 residues: Protein PsiE homolog (139 aa).

4 helical membrane passes run 20 to 40 (IVLCTALIALAIVLIIALVKI), 60 to 80 (AEQAVMFFLYFGFIGLIVQYF), 85 to 105 (HFPLRYFIYAGITAMLRLIIV), and 111 to 131 (VDTILFAGAILIMVIALCLVL).

Belongs to the PsiE family.

The protein resides in the cell inner membrane. The protein is Protein PsiE homolog of Haemophilus influenzae (strain 86-028NP).